We begin with the raw amino-acid sequence, 238 residues long: Accessory gene regulator A (238 aa).

The region spanning 2–125 is the Response regulatory domain; it reads KIFICEDDPK…LRTRIIDCLE (124 aa). D59 is subject to 4-aspartylphosphate. Positions 143 to 238 constitute an HTH LytTR-type domain; the sequence is IELKRGSNSV…YASVRNVKKK (96 aa).

Its subcellular location is the cytoplasm. Its function is as follows. Required for high-level post-exponential phase expression of a series of secreted proteins. This Staphylococcus aureus (strain Mu50 / ATCC 700699) protein is Accessory gene regulator A (agrA).